The sequence spans 491 residues: 2,3-bisphosphoglycerate-independent phosphoglycerate mutase (491 aa).

The Mn(2+) site is built by Asp-11 and Ser-61. Catalysis depends on Ser-61, which acts as the Phosphoserine intermediate. Substrate contacts are provided by residues His-118, 147 to 148, Arg-177, Arg-183, 248 to 251, and Lys-320; these read RD and RSDR. The Mn(2+) site is built by Asp-386, His-390, Asp-427, His-428, and His-445.

This sequence belongs to the BPG-independent phosphoglycerate mutase family. Monomer. Mn(2+) is required as a cofactor.

The enzyme catalyses (2R)-2-phosphoglycerate = (2R)-3-phosphoglycerate. It participates in carbohydrate degradation; glycolysis; pyruvate from D-glyceraldehyde 3-phosphate: step 3/5. Its function is as follows. Catalyzes the interconversion of 2-phosphoglycerate and 3-phosphoglycerate. This Aliarcobacter butzleri (strain RM4018) (Arcobacter butzleri) protein is 2,3-bisphosphoglycerate-independent phosphoglycerate mutase.